The chain runs to 459 residues: Serine--tRNA ligase (459 aa).

L-serine is bound at residue 254-256; sequence TAE. ATP is bound by residues 285 to 287 and Val-301; that span reads RKE. Glu-308 lines the L-serine pocket. An ATP-binding site is contributed by 372-375; that stretch reads EMVS. Thr-408 provides a ligand contact to L-serine.

This sequence belongs to the class-II aminoacyl-tRNA synthetase family. Type-1 seryl-tRNA synthetase subfamily. Homodimer. The tRNA molecule binds across the dimer.

It is found in the cytoplasm. The enzyme catalyses tRNA(Ser) + L-serine + ATP = L-seryl-tRNA(Ser) + AMP + diphosphate + H(+). The catalysed reaction is tRNA(Sec) + L-serine + ATP = L-seryl-tRNA(Sec) + AMP + diphosphate + H(+). It participates in aminoacyl-tRNA biosynthesis; selenocysteinyl-tRNA(Sec) biosynthesis; L-seryl-tRNA(Sec) from L-serine and tRNA(Sec): step 1/1. Catalyzes the attachment of serine to tRNA(Ser). Is also able to aminoacylate tRNA(Sec) with serine, to form the misacylated tRNA L-seryl-tRNA(Sec), which will be further converted into selenocysteinyl-tRNA(Sec). The chain is Serine--tRNA ligase from Staphylothermus marinus (strain ATCC 43588 / DSM 3639 / JCM 9404 / F1).